The chain runs to 142 residues: Large ribosomal subunit protein uL11 (142 aa).

The protein belongs to the universal ribosomal protein uL11 family. In terms of assembly, part of the ribosomal stalk of the 50S ribosomal subunit. Interacts with L10 and the large rRNA to form the base of the stalk. L10 forms an elongated spine to which L12 dimers bind in a sequential fashion forming a multimeric L10(L12)X complex. In terms of processing, one or more lysine residues are methylated.

Forms part of the ribosomal stalk which helps the ribosome interact with GTP-bound translation factors. The protein is Large ribosomal subunit protein uL11 of Mesorhizobium japonicum (strain LMG 29417 / CECT 9101 / MAFF 303099) (Mesorhizobium loti (strain MAFF 303099)).